The sequence spans 125 residues: Histone H1-like protein Hc1 (125 aa).

The interval 98–125 (TKAKVKPTKKAAPKTKVKTAKKTRSTKK) is disordered. Positions 100–125 (AKVKPTKKAAPKTKVKTAKKTRSTKK) are enriched in basic residues.

The protein belongs to the histone H1/H5 family. HCT subfamily.

Might have a role analogous to that of eukaryotic histone proteins. The sequence is that of Histone H1-like protein Hc1 (hctA) from Chlamydia trachomatis serovar D (strain ATCC VR-885 / DSM 19411 / UW-3/Cx).